A 477-amino-acid polypeptide reads, in one-letter code: AAA-ATPase At3g28600 (477 aa).

A signal peptide spans 1-26; sequence MMMGNTFGSSLASLFFLWATIQQIFP. An ATP-binding site is contributed by 245 to 252; that stretch reads GPPGTGKS.

Belongs to the AAA ATPase family. BCS1 subfamily. Mg(2+) is required as a cofactor.

The catalysed reaction is ATP + H2O = ADP + phosphate + H(+). The chain is AAA-ATPase At3g28600 from Arabidopsis thaliana (Mouse-ear cress).